Here is a 142-residue protein sequence, read N- to C-terminus: 3-hydroxyacyl-[acyl-carrier-protein] dehydratase FabZ (142 aa).

Residue His-41 is part of the active site.

This sequence belongs to the thioester dehydratase family. FabZ subfamily.

Its subcellular location is the cytoplasm. The catalysed reaction is a (3R)-hydroxyacyl-[ACP] = a (2E)-enoyl-[ACP] + H2O. Functionally, involved in unsaturated fatty acids biosynthesis. Catalyzes the dehydration of short chain beta-hydroxyacyl-ACPs and long chain saturated and unsaturated beta-hydroxyacyl-ACPs. The protein is 3-hydroxyacyl-[acyl-carrier-protein] dehydratase FabZ of Symbiobacterium thermophilum (strain DSM 24528 / JCM 14929 / IAM 14863 / T).